The sequence spans 309 residues: Sporulation sigma-E factor-processing peptidase (309 aa).

The next 5 helical transmembrane spans lie at 7-27 (VIWL…AFIL), 36-55 (LVGG…TPFS), 61-78 (PAGK…TFGF), 88-105 (LFSF…IIGA), and 130-147 (PISW…WFFS). The active site involves Asp-183.

The protein belongs to the peptidase U4 family. Self-associates. Interacts with SigE. Interacts with SpoIIR.

It is found in the cell membrane. Its function is as follows. Probable aspartic protease that is responsible for the proteolytic cleavage of the RNA polymerase sigma E factor (SigE/spoIIGB) to yield the active peptide in the mother cell during sporulation. Responds to a signal from the forespore that is triggered by the extracellular signal protein SpoIIR. The chain is Sporulation sigma-E factor-processing peptidase (spoIIGA) from Bacillus subtilis (strain 168).